Reading from the N-terminus, the 61-residue chain is Insect toxin AaHIT5 (61 aa).

One can recognise an LCN-type CS-alpha/beta domain in the interval 1–61 (DGYIKRHDGC…AWKSETNTCD (61 aa)). Intrachain disulfides connect cysteine 10-cysteine 60, cysteine 14-cysteine 35, cysteine 21-cysteine 42, and cysteine 25-cysteine 44.

As to expression, expressed by the venom gland.

The protein localises to the secreted. In terms of biological role, excitatory insect toxins induce a spastic paralysis. They bind voltage-independently to sodium channels (Nav) and shift the voltage of activation toward more negative potentials thereby affecting sodium channel activation and promoting spontaneous and repetitive firing. This toxin elicits excitatory activity with no flaccid paralysis despite its high degree of sequence similarity with other depressant insect toxins. This toxin is active only on insects. This is Insect toxin AaHIT5 from Androctonus australis (Sahara scorpion).